Consider the following 126-residue polypeptide: S-adenosylmethionine decarboxylase proenzyme (126 aa).

Serine 63 functions as the Schiff-base intermediate with substrate; via pyruvic acid in the catalytic mechanism. The residue at position 63 (serine 63) is a Pyruvic acid (Ser); by autocatalysis. Histidine 68 acts as the Proton acceptor; for processing activity in catalysis. The Proton donor; for catalytic activity role is filled by cysteine 83.

Belongs to the prokaryotic AdoMetDC family. Type 1 subfamily. In terms of assembly, heterotetramer of two alpha and two beta chains arranged as a dimer of alpha/beta heterodimers. It depends on pyruvate as a cofactor. Post-translationally, is synthesized initially as an inactive proenzyme. Formation of the active enzyme involves a self-maturation process in which the active site pyruvoyl group is generated from an internal serine residue via an autocatalytic post-translational modification. Two non-identical subunits are generated from the proenzyme in this reaction, and the pyruvate is formed at the N-terminus of the alpha chain, which is derived from the carboxyl end of the proenzyme. The post-translation cleavage follows an unusual pathway, termed non-hydrolytic serinolysis, in which the side chain hydroxyl group of the serine supplies its oxygen atom to form the C-terminus of the beta chain, while the remainder of the serine residue undergoes an oxidative deamination to produce ammonia and the pyruvoyl group blocking the N-terminus of the alpha chain.

It catalyses the reaction S-adenosyl-L-methionine + H(+) = S-adenosyl 3-(methylsulfanyl)propylamine + CO2. The protein operates within amine and polyamine biosynthesis; S-adenosylmethioninamine biosynthesis; S-adenosylmethioninamine from S-adenosyl-L-methionine: step 1/1. Its function is as follows. Catalyzes the decarboxylation of S-adenosylmethionine to S-adenosylmethioninamine (dcAdoMet), the propylamine donor required for the synthesis of the polyamines spermine and spermidine from the diamine putrescine. This chain is S-adenosylmethionine decarboxylase proenzyme, found in Clostridium tetani (strain Massachusetts / E88).